Here is a 67-residue protein sequence, read N- to C-terminus: Small ribosomal subunit protein eS27 (67 aa).

Cysteine 22, cysteine 25, cysteine 41, and cysteine 44 together coordinate Zn(2+). Residues 22 to 44 (CPDCGNEQVTFSHAAMVVRCLVC) form a C4-type zinc finger.

Belongs to the eukaryotic ribosomal protein eS27 family. Part of the 30S ribosomal subunit. Zn(2+) serves as cofactor.

This Pyrobaculum neutrophilum (strain DSM 2338 / JCM 9278 / NBRC 100436 / V24Sta) (Thermoproteus neutrophilus) protein is Small ribosomal subunit protein eS27.